Reading from the N-terminus, the 261-residue chain is Imidazole glycerol phosphate synthase subunit HisF (261 aa).

Catalysis depends on residues D12 and D131.

The protein belongs to the HisA/HisF family. As to quaternary structure, heterodimer of HisH and HisF.

The protein resides in the cytoplasm. The catalysed reaction is 5-[(5-phospho-1-deoxy-D-ribulos-1-ylimino)methylamino]-1-(5-phospho-beta-D-ribosyl)imidazole-4-carboxamide + L-glutamine = D-erythro-1-(imidazol-4-yl)glycerol 3-phosphate + 5-amino-1-(5-phospho-beta-D-ribosyl)imidazole-4-carboxamide + L-glutamate + H(+). The protein operates within amino-acid biosynthesis; L-histidine biosynthesis; L-histidine from 5-phospho-alpha-D-ribose 1-diphosphate: step 5/9. IGPS catalyzes the conversion of PRFAR and glutamine to IGP, AICAR and glutamate. The HisF subunit catalyzes the cyclization activity that produces IGP and AICAR from PRFAR using the ammonia provided by the HisH subunit. The polypeptide is Imidazole glycerol phosphate synthase subunit HisF (Brucella melitensis biotype 2 (strain ATCC 23457)).